A 702-amino-acid polypeptide reads, in one-letter code: Neurochondrin (702 aa).

It belongs to the neurochondrin family.

The protein resides in the cytoplasm. The protein localises to the cytosol. Its subcellular location is the cell projection. It is found in the dendrite. It localises to the postsynapse. In terms of biological role, probably involved in signal transduction, in the nervous system. Required for the spatial learning process. May also be involved in neurite outgrowth. The sequence is that of Neurochondrin (NCDN) from Gallus gallus (Chicken).